The sequence spans 214 residues: Adenylate kinase (214 aa).

Position 10–15 (10–15 (GAGKGT)) interacts with ATP. An NMP region spans residues 30-59 (STGDMLRAAVKAGTPLGLEAKKVMDAGQLV). Residues Thr-31, Arg-36, 57–59 (QLV), 85–88 (GFPR), and Gln-92 contribute to the AMP site. The segment at 122 to 159 (GRRVHPGSGRVYHIVYNPPKVEGKDDVTGEDLAIRPDD) is LID. Residues Arg-123 and 132 to 133 (VY) contribute to the ATP site. 2 residues coordinate AMP: Arg-156 and Arg-167. An ATP-binding site is contributed by Gln-200.

It belongs to the adenylate kinase family. In terms of assembly, monomer.

The protein localises to the cytoplasm. The enzyme catalyses AMP + ATP = 2 ADP. It participates in purine metabolism; AMP biosynthesis via salvage pathway; AMP from ADP: step 1/1. Functionally, catalyzes the reversible transfer of the terminal phosphate group between ATP and AMP. Plays an important role in cellular energy homeostasis and in adenine nucleotide metabolism. This is Adenylate kinase from Shewanella loihica (strain ATCC BAA-1088 / PV-4).